Consider the following 825-residue polypeptide: Neuroligin-3 (825 aa).

Residues 1–34 (MWLQPSLSLSPTPTVGRSLCLTLGFLSLVLRAST) form the signal peptide. Topologically, residues 35-686 (QAPAPTVNTH…NPRDYSTELS (652 aa)) are extracellular. Asn95 is a glycosylation site (N-linked (GlcNAc...) asparagine). Cys103 and Cys138 are disulfide-bonded. The disordered stretch occupies residues 151–172 (SGAKKQGEDLADNDGDEDEDIR). A compositionally biased stretch (acidic residues) spans 159–171 (DLADNDGDEDEDI). 2 disulfide bridges follow: Cys317/Cys328 and Cys487/Cys521. N-linked (GlcNAc...) asparagine glycosylation is present at Asn522. Polar residues-rich tracts occupy residues 622–633 (TKVPPPDTTHSS) and 654–666 (AYSN…SWNG). The tract at residues 622 to 668 (TKVPPPDTTHSSHITRRPNGKTWSTKRPAISPAYSNENAPGSWNGDQ) is disordered. A helical membrane pass occupies residues 687 to 707 (VTIAVGASLLFLNVLAFAALY). Residues 708-825 (YRKDKRRQEP…LPHSHSTTRV (118 aa)) are Cytoplasmic-facing. Ser722 carries the post-translational modification Phosphoserine. Tyr769 bears the Phosphotyrosine mark.

This sequence belongs to the type-B carboxylesterase/lipase family. In terms of assembly, homodimer, and heterodimer with NLGN1 and NLGN2. Interacts with neurexins NRXN1, NRXN2 and NRXN3. Interaction with neurexins is mediated by heparan sulfate glycan modification on neurexin. Interacts (via its C-terminus) with DLG4/PSD-95 (via PDZ domain 3). Brain and arteries (at protein level). Detected in heart, brain, spleen, lung, liver, skeletal muscle, kidney and testis. Expressed in olfactory bulb and olfactory epithelium. Found in olfactory ensheathing glia but not in olfactory neurons, and in developing peripheral glia.

It is found in the cell membrane. The protein resides in the synapse. Functionally, cell surface protein involved in cell-cell-interactions via its interactions with neurexin family members. Plays a role in synapse function and synaptic signal transmission, and probably mediates its effects by recruiting and clustering other synaptic proteins. May promote the initial formation of synapses, but is not essential for this. May also play a role in glia-glia or glia-neuron interactions in the developing peripheral nervous system. The polypeptide is Neuroligin-3 (Nlgn3) (Mus musculus (Mouse)).